A 110-amino-acid chain; its full sequence is uncharacterized protein (110 aa).

A signal peptide spans 1-23 (MKRITINIITMFIAAAVISLTGT).

This is an uncharacterized protein from Bacillus subtilis (strain 168).